The sequence spans 339 residues: NADH-quinone oxidoreductase subunit H (339 aa).

The next 9 helical transmembrane spans lie at 9–29, 50–70, 82–102, 115–135, 161–181, 187–207, 235–255, 275–295, and 311–331; these read IFPL…LILC, PNVV…KLLF, ILFI…WAVI, VGVL…IIAG, MGLV…SEII, IPWW…ISVL, MGFA…SAMT, IPGF…FLWI, and GWKV…SVLV.

This sequence belongs to the complex I subunit 1 family. NDH-1 is composed of 14 different subunits. Subunits NuoA, H, J, K, L, M, N constitute the membrane sector of the complex.

It localises to the cell inner membrane. The enzyme catalyses a quinone + NADH + 5 H(+)(in) = a quinol + NAD(+) + 4 H(+)(out). Functionally, NDH-1 shuttles electrons from NADH, via FMN and iron-sulfur (Fe-S) centers, to quinones in the respiratory chain. The immediate electron acceptor for the enzyme in this species is believed to be ubiquinone. Couples the redox reaction to proton translocation (for every two electrons transferred, four hydrogen ions are translocated across the cytoplasmic membrane), and thus conserves the redox energy in a proton gradient. This subunit may bind ubiquinone. The polypeptide is NADH-quinone oxidoreductase subunit H (Rickettsia rickettsii (strain Iowa)).